The sequence spans 545 residues: Chaperonin GroEL (545 aa).

Residues 30–33, Lys51, 87–91, Gly415, and Asp495 each bind ATP; these read TLGP and DGTTT.

This sequence belongs to the chaperonin (HSP60) family. Forms a cylinder of 14 subunits composed of two heptameric rings stacked back-to-back. Interacts with the co-chaperonin GroES.

The protein localises to the cytoplasm. It catalyses the reaction ATP + H2O + a folded polypeptide = ADP + phosphate + an unfolded polypeptide.. Functionally, together with its co-chaperonin GroES, plays an essential role in assisting protein folding. The GroEL-GroES system forms a nano-cage that allows encapsulation of the non-native substrate proteins and provides a physical environment optimized to promote and accelerate protein folding. This is Chaperonin GroEL from Shewanella amazonensis (strain ATCC BAA-1098 / SB2B).